The primary structure comprises 53 residues: Lupus La protein homolog (53 aa).

Over residues 1–13 the composition is skewed to basic and acidic residues; the sequence is GKVEFQGKKTKFD. The disordered stretch occupies residues 1–53; sequence GKVEFQGKKTKFDSDDERNENGAAGPVKRAREETDKEEPASKQQKTENGAGDQ. Lys-8 is modified (N6-acetyllysine). Thr-10 carries the post-translational modification Phosphothreonine. Ser-14 bears the Phosphoserine mark. Residues 29–40 are compositionally biased toward basic and acidic residues; that stretch reads RAREETDKEEPA.

In terms of assembly, interacts with DDX15. May interact with RUFY1. Post-translationally, phosphorylated.

Its subcellular location is the nucleus. In terms of biological role, binds to the 3' poly(U) terminus of nascent RNA polymerase III transcripts, protecting them from exonuclease digestion and facilitating their folding and maturation. This chain is Lupus La protein homolog (SSB), found in Oryctolagus cuniculus (Rabbit).